The primary structure comprises 87 residues: Large ribosomal subunit protein bL27 (87 aa).

Over residues 1–11 (MASKASGGSTR) the composition is skewed to polar residues. Residues 1–21 (MASKASGGSTRNGRDSNSKRL) form a disordered region.

The protein belongs to the bacterial ribosomal protein bL27 family.

The sequence is that of Large ribosomal subunit protein bL27 from Hydrogenobaculum sp. (strain Y04AAS1).